We begin with the raw amino-acid sequence, 393 residues long: Bone morphogenetic protein 15 (393 aa).

Residues 1–25 (MVLLSILRILLWGLVLFMEHRVQMT) form the signal peptide. Residues 26-268 (QVGQPSIAHL…DPSLLLRRAR (243 aa)) constitute a propeptide that is removed on maturation. N-linked (GlcNAc...) asparagine glycans are attached at residues Asn-86 and Asn-237. Cystine bridges form between Cys-292/Cys-358, Cys-321/Cys-390, and Cys-325/Cys-392. A glycan (N-linked (GlcNAc...) asparagine) is linked at Asn-374.

The protein belongs to the TGF-beta family. As to quaternary structure, homodimer. But, in contrast to other members of this family, cannot be disulfide-linked.

It localises to the secreted. In terms of biological role, may be involved in follicular development. Oocyte-specific growth/differentiation factor that stimulates folliculogenesis and granulosa cell (GC) growth. This Ovis aries (Sheep) protein is Bone morphogenetic protein 15 (BMP15).